We begin with the raw amino-acid sequence, 630 residues long: tRNA uridine 5-carboxymethylaminomethyl modification enzyme MnmG (630 aa).

13–18 provides a ligand contact to FAD; sequence GGGHAG. Residue 273 to 287 participates in NAD(+) binding; sequence GPRYCPSIEDKIHRF.

Belongs to the MnmG family. As to quaternary structure, homodimer. Heterotetramer of two MnmE and two MnmG subunits. It depends on FAD as a cofactor.

It is found in the cytoplasm. In terms of biological role, NAD-binding protein involved in the addition of a carboxymethylaminomethyl (cmnm) group at the wobble position (U34) of certain tRNAs, forming tRNA-cmnm(5)s(2)U34. This Pseudomonas entomophila (strain L48) protein is tRNA uridine 5-carboxymethylaminomethyl modification enzyme MnmG.